A 167-amino-acid chain; its full sequence is Shikimate kinase (167 aa).

Residue 12–17 (GSGKTT) coordinates ATP. Residue threonine 16 participates in Mg(2+) binding. Residues aspartate 34, arginine 58, and glycine 80 each coordinate substrate. An ATP-binding site is contributed by arginine 117. Arginine 135 provides a ligand contact to substrate. Arginine 152 is an ATP binding site.

It belongs to the shikimate kinase family. In terms of assembly, monomer. Mg(2+) is required as a cofactor.

It localises to the cytoplasm. The enzyme catalyses shikimate + ATP = 3-phosphoshikimate + ADP + H(+). It functions in the pathway metabolic intermediate biosynthesis; chorismate biosynthesis; chorismate from D-erythrose 4-phosphate and phosphoenolpyruvate: step 5/7. Its function is as follows. Catalyzes the specific phosphorylation of the 3-hydroxyl group of shikimic acid using ATP as a cosubstrate. This is Shikimate kinase from Salinispora tropica (strain ATCC BAA-916 / DSM 44818 / JCM 13857 / NBRC 105044 / CNB-440).